A 453-amino-acid chain; its full sequence is Probable acetylornithine aminotransferase, mitochondrial (453 aa).

K302 is subject to N6-(pyridoxal phosphate)lysine.

This sequence belongs to the class-III pyridoxal-phosphate-dependent aminotransferase family. Pyridoxal 5'-phosphate serves as cofactor.

Its subcellular location is the mitochondrion matrix. The catalysed reaction is N(2)-acetyl-L-ornithine + 2-oxoglutarate = N-acetyl-L-glutamate 5-semialdehyde + L-glutamate. Its pathway is amino-acid biosynthesis; L-arginine biosynthesis; N(2)-acetyl-L-ornithine from L-glutamate: step 4/4. The polypeptide is Probable acetylornithine aminotransferase, mitochondrial (argD) (Dictyostelium discoideum (Social amoeba)).